The chain runs to 70 residues: ATP synthase subunit c (70 aa).

The next 2 membrane-spanning stretches (helical) occupy residues 3-23 (ALAA…IGIA) and 44-64 (LFLI…VIAF).

Belongs to the ATPase C chain family. In terms of assembly, F-type ATPases have 2 components, F(1) - the catalytic core - and F(0) - the membrane proton channel. F(1) has five subunits: alpha(3), beta(3), gamma(1), delta(1), epsilon(1). F(0) has three main subunits: a(1), b(2) and c(10-14). The alpha and beta chains form an alternating ring which encloses part of the gamma chain. F(1) is attached to F(0) by a central stalk formed by the gamma and epsilon chains, while a peripheral stalk is formed by the delta and b chains.

The protein resides in the cell membrane. In terms of biological role, f(1)F(0) ATP synthase produces ATP from ADP in the presence of a proton or sodium gradient. F-type ATPases consist of two structural domains, F(1) containing the extramembraneous catalytic core and F(0) containing the membrane proton channel, linked together by a central stalk and a peripheral stalk. During catalysis, ATP synthesis in the catalytic domain of F(1) is coupled via a rotary mechanism of the central stalk subunits to proton translocation. Its function is as follows. Key component of the F(0) channel; it plays a direct role in translocation across the membrane. A homomeric c-ring of between 10-14 subunits forms the central stalk rotor element with the F(1) delta and epsilon subunits. This is ATP synthase subunit c from Caldicellulosiruptor bescii (strain ATCC BAA-1888 / DSM 6725 / KCTC 15123 / Z-1320) (Anaerocellum thermophilum).